The chain runs to 274 residues: Large ribosomal subunit protein uL2 (274 aa).

Residues 197–274 form a disordered region; the sequence is NSDHALEKSG…SKYIIERRKK (78 aa). 2 stretches are compositionally biased toward basic residues: residues 207-220 and 244-274; these read KAGR…RPHN and PRSR…RRKK.

Belongs to the universal ribosomal protein uL2 family. In terms of assembly, part of the 50S ribosomal subunit. Forms a bridge to the 30S subunit in the 70S ribosome.

Its function is as follows. One of the primary rRNA binding proteins. Required for association of the 30S and 50S subunits to form the 70S ribosome, for tRNA binding and peptide bond formation. It has been suggested to have peptidyltransferase activity; this is somewhat controversial. Makes several contacts with the 16S rRNA in the 70S ribosome. This Porphyromonas gingivalis (strain ATCC BAA-308 / W83) protein is Large ribosomal subunit protein uL2.